The chain runs to 131 residues: Peptide methionine sulfoxide reductase MsrB (131 aa).

Positions 8–130 (DAEWRAQLTD…NSVCLDLKRS (123 aa)) constitute a MsrB domain. Cysteine 47, cysteine 50, cysteine 96, and cysteine 99 together coordinate Zn(2+). Cysteine 119 serves as the catalytic Nucleophile.

It belongs to the MsrB Met sulfoxide reductase family. Zn(2+) serves as cofactor.

The catalysed reaction is L-methionyl-[protein] + [thioredoxin]-disulfide + H2O = L-methionyl-(R)-S-oxide-[protein] + [thioredoxin]-dithiol. The protein is Peptide methionine sulfoxide reductase MsrB of Alkalilimnicola ehrlichii (strain ATCC BAA-1101 / DSM 17681 / MLHE-1).